A 231-amino-acid chain; its full sequence is U1 small nuclear ribonucleoprotein C (231 aa).

Residues 4-36 (YYCEYCHSYLTHDTLSVRKSHLVGKNHLRITAD) form a Matrin-type zinc finger. Over residues 49-61 (HNHKRRHIGKRGR) the composition is skewed to basic residues. Disordered stretches follow at residues 49–71 (HNHKRRHIGKRGRKERENSSQNE), 137–177 (PQRA…LEPP), and 205–231 (ESKKRMHSDGIRKPSSANGYKRRRYGN).

This sequence belongs to the U1 small nuclear ribonucleoprotein C family. U1 snRNP is composed of the 7 core Sm proteins SMB1, SMD1, SMD2, SMD3, SME1, SMX3 and SMX2 (Sm proteins B, D1, D2, D3, E, F and G, respectively) that assemble in a heptameric protein ring on the Sm site of the small nuclear RNA to form the core snRNP, and at least 10 U1 snRNP-specific proteins SNP1/U1-70K, MUD1/U1-A, YHC1/U1-C, LUC7, NAM8, PRP39, PRP40, PRP42, SNU56 and SNU71. YHC1/U1-C interacts with U1 snRNA and the 5' splice-site region of the pre-mRNA.

The protein localises to the nucleus. In terms of biological role, component of the spliceosomal U1 snRNP, which is essential for recognition of the pre-mRNA 5' splice-site and the subsequent assembly of the spliceosome. YHC1/U1-C is directly involved in initial 5' splice-site recognition for both constitutive and regulated alternative splicing. The interaction with the 5' splice-site seems to precede base-pairing between the pre-mRNA and the U1 snRNA. Stimulates commitment or early (E) complex formation by stabilizing the base pairing of the 5' end of the U1 snRNA and the 5' splice-site region. This chain is U1 small nuclear ribonucleoprotein C, found in Saccharomyces cerevisiae (strain ATCC 204508 / S288c) (Baker's yeast).